A 103-amino-acid polypeptide reads, in one-letter code: Large ribosomal subunit protein bL21 (103 aa).

This sequence belongs to the bacterial ribosomal protein bL21 family. As to quaternary structure, part of the 50S ribosomal subunit. Contacts protein L20.

In terms of biological role, this protein binds to 23S rRNA in the presence of protein L20. This is Large ribosomal subunit protein bL21 from Mycobacterium tuberculosis (strain ATCC 25618 / H37Rv).